The chain runs to 141 residues: Oleosin L (141 aa).

A run of 3 helical transmembrane segments spans residues 23 to 43 (VLFF…LALA), 46 to 66 (VVLM…ILPV), and 74 to 94 (AAAF…LIWV). The Proline-knot signature appears at 54–65 (PVFLLLSPVILP).

The protein belongs to the oleosin family. Expressed in megagametophytes (at protein level).

It is found in the lipid droplet. Its subcellular location is the membrane. In Pinus massoniana (Chinese red pine), this protein is Oleosin L.